We begin with the raw amino-acid sequence, 277 residues long: Phosphonoacetaldehyde hydrolase (277 aa).

Asp-20 serves as the catalytic Nucleophile. Residues Asp-20 and Ala-22 each contribute to the Mg(2+) site. Lys-61 serves as the catalytic Schiff-base intermediate with substrate. Asp-194 is a Mg(2+) binding site.

Belongs to the HAD-like hydrolase superfamily. PhnX family. In terms of assembly, homodimer. Mg(2+) is required as a cofactor.

It catalyses the reaction phosphonoacetaldehyde + H2O = acetaldehyde + phosphate + H(+). Its function is as follows. Involved in phosphonate degradation. The sequence is that of Phosphonoacetaldehyde hydrolase from Syntrophobacter fumaroxidans (strain DSM 10017 / MPOB).